Here is a 78-residue protein sequence, read N- to C-terminus: Acyl carrier protein (78 aa).

A Carrier domain is found at 1-76 (MALFEDIQAV…DVVKYIEDNK (76 aa)). Position 36 is an O-(pantetheine 4'-phosphoryl)serine (Ser36).

Belongs to the acyl carrier protein (ACP) family. 4'-phosphopantetheine is transferred from CoA to a specific serine of apo-ACP by AcpS. This modification is essential for activity because fatty acids are bound in thioester linkage to the sulfhydryl of the prosthetic group.

The protein localises to the cytoplasm. It participates in lipid metabolism; fatty acid biosynthesis. In terms of biological role, carrier of the growing fatty acid chain in fatty acid biosynthesis. This is Acyl carrier protein from Helicobacter acinonychis (strain Sheeba).